The following is a 321-amino-acid chain: tRNA(Ile)-lysidine synthase (321 aa).

Serine 30–serine 35 serves as a coordination point for ATP.

Belongs to the tRNA(Ile)-lysidine synthase family.

It is found in the cytoplasm. The enzyme catalyses cytidine(34) in tRNA(Ile2) + L-lysine + ATP = lysidine(34) in tRNA(Ile2) + AMP + diphosphate + H(+). Functionally, ligates lysine onto the cytidine present at position 34 of the AUA codon-specific tRNA(Ile) that contains the anticodon CAU, in an ATP-dependent manner. Cytidine is converted to lysidine, thus changing the amino acid specificity of the tRNA from methionine to isoleucine. This chain is tRNA(Ile)-lysidine synthase, found in Chlamydia muridarum (strain MoPn / Nigg).